Consider the following 241-residue polypeptide: Diacetyl reductase [(S)-acetoin forming] (241 aa).

NAD(+) is bound at residue 6 to 30 (LVTGAGQGIGKAIALRLVKDGFAVA). A substrate-binding site is contributed by serine 139. The Proton acceptor role is filled by tyrosine 152. The active site involves lysine 156.

This sequence belongs to the short-chain dehydrogenases/reductases (SDR) family. In terms of assembly, homotetramer.

It catalyses the reaction (S)-acetoin + NAD(+) = diacetyl + NADH + H(+). In terms of biological role, catalyzes the irreversible reduction of 2,3-butanediol to (S)-acetoin in the presence of NADH. This chain is Diacetyl reductase [(S)-acetoin forming] (budC), found in Raoultella terrigena (Klebsiella terrigena).